A 1352-amino-acid chain; its full sequence is Ubiquitin carboxyl-terminal hydrolase 31 (1352 aa).

Residues M1 to S16 show a composition bias toward low complexity. Disordered regions lie at residues M1–G62 and S79–C119. The span at R32–A43 shows a compositional bias: gly residues. The segment covering S44–G62 has biased composition (low complexity). Over residues P95–P117 the composition is skewed to pro residues. One can recognise a USP domain in the interval A128–R765. Residue C137 is the Nucleophile of the active site. The disordered stretch occupies residues R162–E185. The active-site Proton acceptor is H723. 3 disordered regions span residues L812 to R835, S919 to R939, and D951 to Q1352. Residues L958–S970 are compositionally biased toward polar residues. 4 stretches are compositionally biased toward low complexity: residues V992 to S1001, S1051 to P1070, D1078 to S1089, and P1101 to T1138. The segment covering R1148–S1159 has biased composition (basic and acidic residues). Residues R1160–V1181 are compositionally biased toward polar residues. Over residues S1198–S1210 the composition is skewed to low complexity. 2 stretches are compositionally biased toward basic and acidic residues: residues L1215–G1225 and R1234–D1243. The segment covering S1251–K1264 has biased composition (low complexity). K1264 carries the N6-acetyllysine modification. 2 stretches are compositionally biased toward polar residues: residues P1278–K1290 and M1341–Q1352.

The protein belongs to the peptidase C19 family. Post-translationally, acetylated at Lys-1264. Acetylation decreases activity. Deacetylated by SIRT1. As to expression, widely expressed.

It catalyses the reaction Thiol-dependent hydrolysis of ester, thioester, amide, peptide and isopeptide bonds formed by the C-terminal Gly of ubiquitin (a 76-residue protein attached to proteins as an intracellular targeting signal).. Functionally, deubiquitinase that recognizes and hydrolyzes the peptide bond at the C-terminal Gly of ubiquitin. May play a role in the regulation of NF-kappa-B signaling pathway by deubiquitinating TRAF2. In terms of biological role, (Microbial infection) Plays a positive role in foot-and-mouth disease and classical swine fever viral infection. Mechanistically, associates with internal ribosomal entry site (IRES) element within the 5'-untranslated region of viral genomes to promote translation of the virus-encoded polyprotein. This chain is Ubiquitin carboxyl-terminal hydrolase 31 (USP31), found in Homo sapiens (Human).